A 370-amino-acid chain; its full sequence is Putative glutamate--cysteine ligase 2 (370 aa).

It belongs to the glutamate--cysteine ligase type 2 family. YbdK subfamily.

It catalyses the reaction L-cysteine + L-glutamate + ATP = gamma-L-glutamyl-L-cysteine + ADP + phosphate + H(+). In terms of biological role, ATP-dependent carboxylate-amine ligase which exhibits weak glutamate--cysteine ligase activity. In Herminiimonas arsenicoxydans, this protein is Putative glutamate--cysteine ligase 2.